Reading from the N-terminus, the 423-residue chain is 26S proteasome regulatory subunit 6A homolog B (423 aa).

The residue at position 18 (Ser-18) is a Phosphoserine. 211–218 is an ATP binding site; sequence GPPGTGKT. Glycyl lysine isopeptide (Lys-Gly) (interchain with G-Cter in ubiquitin) cross-links involve residues Lys-234, Lys-278, and Lys-415.

It belongs to the AAA ATPase family. As to quaternary structure, component of the 19S regulatory particle (RP/PA700) base subcomplex of the 26S proteasome. The 26S proteasome is composed of a core protease (CP), known as the 20S proteasome, capped at one or both ends by the 19S regulatory particle (RP/PA700). The RP/PA700 complex is composed of at least 17 different subunits in two subcomplexes, the base and the lid, which form the portions proximal and distal to the 20S proteolytic core, respectively.

It localises to the cytoplasm. The protein localises to the nucleus. Functionally, the 26S proteasome is involved in the ATP-dependent degradation of ubiquitinated proteins. The regulatory (or ATPase) complex confers ATP dependency and substrate specificity to the 26S complex. This is 26S proteasome regulatory subunit 6A homolog B (RPT5B) from Arabidopsis thaliana (Mouse-ear cress).